The chain runs to 448 residues: MGLDQDKIKKRLSQIEIDINQMNQMIDENLQLVEPAEDEAVEDNVKDTGVVDAVKVAETALFSGNDGADSNPGDSAQVEEHKTAQVHIPTENEANKSTDDPSQLSVTQPFIAKEQITHTAIAIGDSYNSFVANSAGNEKAKDSCTENKEDGTVNIDQNRGEADVEIIENNDDEWEDEKSDVEEGRVDKGTEENSEIESFKSPMPQNNTLGGENKLDAELVLDKFSSANKDLDIQPQTIVVGGDNEYNHESSRLADQTPHDDNSENCPNRSGGSTPLDSQTKIFIPKKNSKEDGTNINHFNSDGDGQKKMANFETRRPTNPFRVISVSSNSNSRNGSRKSSLNKYDSPVSSPITSASELGSIAKLEKRHDYLSMKCIKLQKEIDYLNKMNAQGSLSMEDGKRLHRAVVKLQEYLDKKTKEKYEVGVLLSRHLRKQIDRGENGQFWIGTK.

3 disordered regions span residues 63-103, 171-211, and 242-352; these read SGND…DPSQ, DDEW…TLGG, and GDNE…SSPI. A phosphoserine mark is found at Ser-70 and Ser-179. Over residues 171-180 the composition is skewed to acidic residues; that stretch reads DDEWEDEKSD. A compositionally biased stretch (basic and acidic residues) spans 181-191; the sequence is VEEGRVDKGTE. Residue Ser-194 is modified to Phosphoserine. The segment covering 245–262 has biased composition (basic and acidic residues); sequence EYNHESSRLADQTPHDDN. A Phosphothreonine modification is found at Thr-257. The span at 264 to 281 shows a compositional bias: polar residues; it reads ENCPNRSGGSTPLDSQTK. Residues Ser-270 and Ser-273 each carry the phosphoserine modification. Thr-274 is modified (phosphothreonine). Residues 325 to 343 show a composition bias toward low complexity; that stretch reads SVSSNSNSRNGSRKSSLNK. Residues Ser-332 and Ser-340 each carry the phosphoserine modification. Position 344 is a phosphotyrosine (Tyr-344). Phosphoserine occurs at positions 346 and 350.

As to quaternary structure, component of the GIN4 complex composed of at least BNI5, CDC3, CDC10, CDC11, CDC12, GIN4, NAP1 and SHS1. Interacts directly with CDC11, CDC12 and SHS1.

The protein resides in the cytoplasm. The protein localises to the bud neck. In terms of biological role, required for normal septin function and cytokinesis. Its recruitment to the bud neck by CDCd11 and SHS1 ensures efficient localization at the bud neck of MYO1, the type II myosin of the actomyosin contractile ring. This is Bud neck protein 5 from Saccharomyces cerevisiae (strain ATCC 204508 / S288c) (Baker's yeast).